Here is a 3957-residue protein sequence, read N- to C-terminus: Ankyrin-2 (3957 aa).

A compositionally biased stretch (basic and acidic residues) spans Met1–Glu14. Residues Met1–Ser34 form a disordered region. 24 ANK repeats span residues Asp30 to Gln62, Asn63 to Ser92, Lys96 to Ala125, Asn129 to Thr158, Asp162 to Val191, Leu193 to Val220, Ser232 to Phe261, Asn265 to Ala294, Asp298 to Ala327, Asn331 to Asp360, Asp364 to Ala393, Asn397 to Ala426, Ser430 to Val459, Arg463 to Ala492, Glu496 to Ala525, Asn529 to Leu558, Lys562 to Ser591, Asn595 to Ala624, Asn628 to Ile657, Gln661 to Met690, Ser694 to Ala723, Leu727 to Ala756, Asn760 to Ala789, and Asn793 to Thr822. Residues Ser31 and Ser34 each carry the phosphoserine modification. Phosphotyrosine is present on Tyr378. Tyr531 bears the Phosphotyrosine mark. Residue Ser846 is modified to Phosphoserine. Residue Thr853 is modified to Phosphothreonine. Ser874 is modified (phosphoserine). The tract at residues Ser966 to Asp1125 is interaction with SPTBN1. 2 consecutive ZU5 domains span residues Phe968–Arg1156 and Lys1158–Cys1304. Residues Val1289–Glu1423 form a UPA domain region. Tyr1382 is modified (phosphotyrosine). One can recognise a Death 1 domain in the interval Ile1450 to Lys1535. The tract at residues Lys1457–Val1486 is disordered. Ser1459, Ser1461, Ser1473, Ser1500, and Ser1596 each carry phosphoserine. A compositionally biased stretch (acidic residues) spans Ser1461–Met1471. 7 disordered regions span residues Ala1670–Ser2137, Ala2197–Leu2411, Ala2430–Pro2484, Ser2507–Glu2586, Glu2604–His2852, Asp2864–Phe2904, and Gln2923–Thr2951. Composition is skewed to basic and acidic residues over residues Ser1674–Pro1683 and Lys1711–Ser1733. A phosphoserine mark is found at Ser1732, Ser1733, and Ser1736. Positions Ile1766 to Gly1783 are enriched in basic and acidic residues. Repeat A repeat units follow at residues His1806 to Arg1817, His1818 to Arg1829, His1830 to Arg1841, His1842 to Lys1853, His1854 to Arg1865, His1866 to Lys1877, and His1878 to Arg1889. The segment at His1806 to Arg1983 is repeat-rich region. Ser1855 and Ser1858 each carry phosphoserine. Basic and acidic residues-rich tracts occupy residues Lys1886 to Pro1902 and Arg1921 to Leu1937. Residues His1890–Arg1900 form a Repeat A; approximate repeat. 2 Repeat A repeats span residues His1901–Lys1912 and Arg1913–Lys1924. A Repeat A; approximate repeat occupies His1925–Lys1935. At Ser1929 the chain carries Phosphoserine. Repeat A repeat units follow at residues Arg1936 to Lys1947, His1948 to Lys1959, His1960 to Lys1971, and Gln1972 to Arg1983. Basic and acidic residues-rich tracts occupy residues Lys1980 to Met1994, Pro2003 to Gly2034, Val2075 to Pro2093, and Glu2102 to Asp2117. The residue at position 2127 (Ser2127) is a Phosphoserine. Over residues Pro2128–Ser2137 the composition is skewed to basic and acidic residues. A Phosphothreonine modification is found at Thr2239. The segment covering Pro2240–Pro2251 has biased composition (polar residues). Ser2243 is subject to Phosphoserine. The span at Lys2252–Thr2282 shows a compositional bias: basic and acidic residues. Position 2269 is a phosphothreonine (Thr2269). Ser2275 is subject to Phosphoserine. The span at Thr2355–Ser2376 shows a compositional bias: polar residues. Ser2405, Ser2440, Ser2454, Ser2516, and Ser2521 each carry phosphoserine. Positions Glu2523–Glu2545 are enriched in polar residues. Basic and acidic residues-rich tracts occupy residues Asn2576–Glu2586 and Glu2604–Glu2619. Thr2583 carries the phosphothreonine modification. Residues Ser2679 and Ser2701 each carry the phosphoserine modification. Low complexity predominate over residues Pro2696 to Pro2705. The span at Glu2729–Gly2776 shows a compositional bias: basic and acidic residues. Phosphoserine occurs at positions 2781 and 2795. Residues Ser2781–Ser2791 are compositionally biased toward low complexity. The segment covering Ser2892 to Arg2903 has biased composition (polar residues). The residue at position 2956 (Ser2956) is a Phosphoserine. 3 disordered regions span residues Asn2987–Glu3016, Leu3069–Asn3099, and Gln3136–Glu3462. Residues Gln2998–Glu3016 show a composition bias toward polar residues. Phosphoserine is present on Ser3075. The residue at position 3078 (Thr3078) is a Phosphothreonine. Residues Thr3078 to Thr3087 show a composition bias toward low complexity. Over residues Glu3090 to Asn3099 the composition is skewed to polar residues. Basic and acidic residues predominate over residues Glu3137–Glu3149. The span at Leu3157–Ser3169 shows a compositional bias: low complexity. Over residues Val3175–Pro3194 the composition is skewed to acidic residues. 2 stretches are compositionally biased toward polar residues: residues Ala3198–Thr3212 and Leu3256–Val3265. A phosphoserine mark is found at Ser3273, Ser3276, and Ser3277. Positions Glu3335–Pro3344 are enriched in basic and acidic residues. Residues Val3357–Pro3374 show a composition bias toward polar residues. Phosphoserine occurs at positions 3390 and 3409. Positions Ser3409–Glu3423 are enriched in basic and acidic residues. Positions Ser3446 to Thr3460 are enriched in low complexity. A Phosphoserine modification is found at Ser3474. The Death 2 domain occupies Ile3569–Thr3653. Residue Ser3735 is modified to Phosphoserine. Phosphothreonine is present on residues Thr3776, Thr3797, Thr3803, and Thr3814. The tract at residues Pro3777–Thr3858 is disordered. Phosphoserine is present on Ser3823. The segment covering Pro3832–Pro3841 has biased composition (basic and acidic residues). Ser3909 carries the post-translational modification Phosphoserine.

As to quaternary structure, interacts with RHBG and SPTBN1. Colocalizes with Na/K ATPase, Na/Ca exchanger and SPTBN1. Directly interacts with DMD; this interaction is necessary for DMD localization at the sarcolemma. Interacts with DCTN4; this interaction is required for DCTN4 retention at costameres. Identified in complexes that contain VIM, EZR, AHNAK, BFSP1, BFSP2, ANK2, PLEC, PRX and spectrin. Interacts (via death domain) with RABGAP1L (via Rab-GAP TBC domain). In terms of processing, phosphorylated at multiple sites by different protein kinases and each phosphorylation event regulates the protein's structure and function. In terms of tissue distribution, present in plasma membrane of neurons as well as glial cells throughout the brain. Expressed in fetal brain and in temporal cortex of adult brain. Also expressed in the inner segments of rod photoreceptors in retina.

Its subcellular location is the cytoplasm. It localises to the cytoskeleton. It is found in the membrane. The protein localises to the myofibril. The protein resides in the sarcomere. Its subcellular location is the m line. It localises to the apical cell membrane. It is found in the cell membrane. The protein localises to the postsynaptic cell membrane. The protein resides in the early endosome. Its subcellular location is the recycling endosome. It localises to the lysosome. It is found in the mitochondrion. The protein localises to the z line. The protein resides in the sarcolemma. Its subcellular location is the T-tubule. In terms of biological role, plays an essential role in the localization and membrane stabilization of ion transporters and ion channels in several cell types, including cardiomyocytes, as well as in striated muscle cells. In skeletal muscle, required for proper localization of DMD and DCTN4 and for the formation and/or stability of a special subset of microtubules associated with costameres and neuromuscular junctions. In cardiomyocytes, required for coordinate assembly of Na/Ca exchanger, SLC8A1/NCX1, Na/K ATPases ATP1A1 and ATP1A2 and inositol 1,4,5-trisphosphate (InsP3) receptors at sarcoplasmic reticulum/sarcolemma sites. Required for expression and targeting of SPTBN1 in neonatal cardiomyocytes and for the regulation of neonatal cardiomyocyte contraction rate. In the inner segment of rod photoreceptors, required for the coordinated expression of the Na/K ATPase, Na/Ca exchanger and beta-2-spectrin (SPTBN1). Plays a role in endocytosis and intracellular protein transport. Associates with phosphatidylinositol 3-phosphate (PI3P)-positive organelles and binds dynactin to promote long-range motility of cells. Recruits RABGAP1L to (PI3P)-positive early endosomes, where RABGAP1L inactivates RAB22A, and promotes polarized trafficking to the leading edge of the migrating cells. Part of the ANK2/RABGAP1L complex which is required for the polarized recycling of fibronectin receptor ITGA5 ITGB1 to the plasma membrane that enables continuous directional cell migration. This is Ankyrin-2 (ANK2) from Homo sapiens (Human).